The sequence spans 93 residues: Transcription factor RADIALIS (93 aa).

The 56-residue stretch at 6–61 (GSGRPWSAKENKAFERALAVYDKDTPDRWANVARAVEGRTPEEVKKHYEILVEDIK) folds into the SANT domain.

In terms of tissue distribution, specifically expressed in the dorsal region of developing flowers.

It localises to the nucleus. In terms of biological role, involved in the dorsovental asymmetry of flowers. Promotes dorsal identity. This chain is Transcription factor RADIALIS (RAD), found in Antirrhinum majus (Garden snapdragon).